A 209-amino-acid polypeptide reads, in one-letter code: Thiamine-phosphate synthase (209 aa).

Residues 40 to 44 (QLREK) and asparagine 72 each bind 4-amino-2-methyl-5-(diphosphooxymethyl)pyrimidine. Positions 73 and 92 each coordinate Mg(2+). Serine 111 contributes to the 4-amino-2-methyl-5-(diphosphooxymethyl)pyrimidine binding site. 2-[(2R,5Z)-2-carboxy-4-methylthiazol-5(2H)-ylidene]ethyl phosphate is bound at residue 137–139 (TNS). Position 140 (lysine 140) interacts with 4-amino-2-methyl-5-(diphosphooxymethyl)pyrimidine. Residues glycine 167 and 187 to 188 (IS) each bind 2-[(2R,5Z)-2-carboxy-4-methylthiazol-5(2H)-ylidene]ethyl phosphate.

The protein belongs to the thiamine-phosphate synthase family. It depends on Mg(2+) as a cofactor.

The catalysed reaction is 2-[(2R,5Z)-2-carboxy-4-methylthiazol-5(2H)-ylidene]ethyl phosphate + 4-amino-2-methyl-5-(diphosphooxymethyl)pyrimidine + 2 H(+) = thiamine phosphate + CO2 + diphosphate. It carries out the reaction 2-(2-carboxy-4-methylthiazol-5-yl)ethyl phosphate + 4-amino-2-methyl-5-(diphosphooxymethyl)pyrimidine + 2 H(+) = thiamine phosphate + CO2 + diphosphate. It catalyses the reaction 4-methyl-5-(2-phosphooxyethyl)-thiazole + 4-amino-2-methyl-5-(diphosphooxymethyl)pyrimidine + H(+) = thiamine phosphate + diphosphate. It functions in the pathway cofactor biosynthesis; thiamine diphosphate biosynthesis; thiamine phosphate from 4-amino-2-methyl-5-diphosphomethylpyrimidine and 4-methyl-5-(2-phosphoethyl)-thiazole: step 1/1. Its function is as follows. Condenses 4-methyl-5-(beta-hydroxyethyl)thiazole monophosphate (THZ-P) and 2-methyl-4-amino-5-hydroxymethyl pyrimidine pyrophosphate (HMP-PP) to form thiamine monophosphate (TMP). The chain is Thiamine-phosphate synthase from Clostridium tetani (strain Massachusetts / E88).